We begin with the raw amino-acid sequence, 303 residues long: Dipeptide transport system permease protein DppB (303 aa).

Transmembrane regions (helical) follow at residues 9 to 29 (LGLL…MMQV), 62 to 82 (YFIY…IYTN), 93 to 113 (LPVS…LGAL), 129 to 149 (IFGF…GTLI), 166 to 186 (GTFS…MAVV), 227 to 247 (IPML…SVLI), and 269 to 289 (FPVI…FILV). The ABC transmembrane type-1 domain maps to 93–290 (LPVSMQLGTQ…VILMVFILVT (198 aa)).

It belongs to the binding-protein-dependent transport system permease family. OppBC subfamily. The complex is composed of two ATP-binding proteins (DppD and DppF), two transmembrane proteins (DppB and DppC) and a solute-binding protein (DppA).

The protein localises to the cell membrane. Part of the ABC transporter DppABCDF involved in dipeptide transport. Responsible for the translocation of the substrate across the membrane. The protein is Dipeptide transport system permease protein DppB of Lactococcus lactis subsp. cremoris (strain MG1363).